We begin with the raw amino-acid sequence, 345 residues long: Molybdopterin synthase catalytic subunit (345 aa).

Substrate is bound by residues 101–102, K117, and 124–126; these read HR and KKE.

It belongs to the MoaE family. MOCS2B subfamily. As to quaternary structure, heterotetramer; composed of 2 small (Mocs2A) and 2 large (Mocs2B) subunits.

The protein localises to the cytoplasm. The catalysed reaction is 2 [molybdopterin-synthase sulfur-carrier protein]-C-terminal-Gly-aminoethanethioate + cyclic pyranopterin phosphate + H2O = molybdopterin + 2 [molybdopterin-synthase sulfur-carrier protein]-C-terminal Gly-Gly + 2 H(+). It participates in cofactor biosynthesis; molybdopterin biosynthesis. Functionally, catalytic subunit of the molybdopterin synthase complex, a complex that catalyzes the conversion of precursor Z into molybdopterin. Acts by mediating the incorporation of 2 sulfur atoms from thiocarboxylated Mocs2A into precursor Z to generate a dithiolene group. The chain is Molybdopterin synthase catalytic subunit from Drosophila virilis (Fruit fly).